The following is a 430-amino-acid chain: 3-phosphoshikimate 1-carboxyvinyltransferase (430 aa).

Lys21, Ser22, and Arg26 together coordinate 3-phosphoshikimate. Lys21 provides a ligand contact to phosphoenolpyruvate. The phosphoenolpyruvate site is built by Gly94 and Arg122. Residues Ser168, Gln170, Asp315, and Lys342 each coordinate 3-phosphoshikimate. Gln170 serves as a coordination point for phosphoenolpyruvate. Asp315 serves as the catalytic Proton acceptor. Phosphoenolpyruvate is bound by residues Arg346 and Arg389.

The protein belongs to the EPSP synthase family. In terms of assembly, monomer.

The protein resides in the cytoplasm. It carries out the reaction 3-phosphoshikimate + phosphoenolpyruvate = 5-O-(1-carboxyvinyl)-3-phosphoshikimate + phosphate. It participates in metabolic intermediate biosynthesis; chorismate biosynthesis; chorismate from D-erythrose 4-phosphate and phosphoenolpyruvate: step 6/7. Its function is as follows. Catalyzes the transfer of the enolpyruvyl moiety of phosphoenolpyruvate (PEP) to the 5-hydroxyl of shikimate-3-phosphate (S3P) to produce enolpyruvyl shikimate-3-phosphate and inorganic phosphate. The protein is 3-phosphoshikimate 1-carboxyvinyltransferase of Salinibacter ruber (strain DSM 13855 / M31).